The primary structure comprises 372 residues: Chloromuconate cycloisomerase (372 aa).

K158 serves as the catalytic Proton acceptor. Residues D187, E213, and D238 each contribute to the Mn(2+) site. E316 functions as the Proton donor in the catalytic mechanism.

The protein belongs to the mandelate racemase/muconate lactonizing enzyme family. Requires Mn(2+) as cofactor.

It catalyses the reaction 2-[(2R)-2-chloro-2,5-dihydro-5-oxofuryl]acetate = 3-chloro-cis,cis-muconate + H(+). It functions in the pathway aromatic compound metabolism; 3-chlorocatechol degradation. This is Chloromuconate cycloisomerase (tfdDII) from Cupriavidus pinatubonensis (strain JMP 134 / LMG 1197) (Cupriavidus necator (strain JMP 134)).